Consider the following 203-residue polypeptide: Ras-like protein family member 10A (203 aa).

The segment at 1 to 203 (MGGSLRVAVL…ALHPARCSLM (203 aa)) is small GTPase-like. GTP is bound at residue 11–18 (GAPGVGKT). The Effector region motif lies at 33–42 (HRPTDGPRLY). Residues 59 to 62 (DGDV) and 129 to 132 (NKRD) each bind GTP. The residue at position 200 (C200) is a Cysteine methyl ester. C200 carries S-farnesyl cysteine lipidation. Positions 201–203 (SLM) are cleaved as a propeptide — removed in mature form.

The protein belongs to the small GTPase superfamily. Ras family. Isoprenylation is essential for nucleolar localization, and the proliferation-inhibiting activity of RASL10A. In terms of tissue distribution, expression appears to be strictly limited to the central nervous system.

Its subcellular location is the cell membrane. The protein localises to the nucleus. It localises to the nucleolus. The catalysed reaction is GTP + H2O = GDP + phosphate + H(+). Its function is as follows. Potent inhibitor of cellular proliferation. The protein is Ras-like protein family member 10A (RASL10A) of Homo sapiens (Human).